A 163-amino-acid chain; its full sequence is Lipoprotein signal peptidase (163 aa).

Helical transmembrane passes span 11 to 31 (ILIA…IATT), 63 to 83 (KMTF…YFFI), and 88 to 108 (YNLF…GNFI). Active-site residues include Asp-118 and Asp-136. Residues 131–151 (IFNIADSSLTIGVILIIIALL) form a helical membrane-spanning segment.

The protein belongs to the peptidase A8 family.

It localises to the cell membrane. The enzyme catalyses Release of signal peptides from bacterial membrane prolipoproteins. Hydrolyzes -Xaa-Yaa-Zaa-|-(S,diacylglyceryl)Cys-, in which Xaa is hydrophobic (preferably Leu), and Yaa (Ala or Ser) and Zaa (Gly or Ala) have small, neutral side chains.. It functions in the pathway protein modification; lipoprotein biosynthesis (signal peptide cleavage). In terms of biological role, this protein specifically catalyzes the removal of signal peptides from prolipoproteins. In Staphylococcus aureus (strain MRSA252), this protein is Lipoprotein signal peptidase.